A 551-amino-acid chain; its full sequence is Chaperonin GroEL (551 aa).

Residues 29-32, K50, 86-90, G417, and D499 contribute to the ATP site; these read TAGP and DGTTT.

It belongs to the chaperonin (HSP60) family. Forms a cylinder of 14 subunits composed of two heptameric rings stacked back-to-back. Interacts with the co-chaperonin GroES.

Its subcellular location is the cytoplasm. It carries out the reaction ATP + H2O + a folded polypeptide = ADP + phosphate + an unfolded polypeptide.. Together with its co-chaperonin GroES, plays an essential role in assisting protein folding. The GroEL-GroES system forms a nano-cage that allows encapsulation of the non-native substrate proteins and provides a physical environment optimized to promote and accelerate protein folding. This Ehrlichia ruminantium (strain Gardel) protein is Chaperonin GroEL.